The sequence spans 379 residues: Lipoyl synthase 1, mitochondrial (379 aa).

The [4Fe-4S] cluster site is built by cysteine 106, cysteine 111, cysteine 117, cysteine 137, cysteine 141, cysteine 144, and serine 352. Positions 122-341 constitute a Radical SAM core domain; the sequence is EHGTQTATIM…EERGNELGFL (220 aa).

Belongs to the radical SAM superfamily. Lipoyl synthase family. [4Fe-4S] cluster serves as cofactor.

Its subcellular location is the mitochondrion. It catalyses the reaction [[Fe-S] cluster scaffold protein carrying a second [4Fe-4S](2+) cluster] + N(6)-octanoyl-L-lysyl-[protein] + 2 oxidized [2Fe-2S]-[ferredoxin] + 2 S-adenosyl-L-methionine + 4 H(+) = [[Fe-S] cluster scaffold protein] + N(6)-[(R)-dihydrolipoyl]-L-lysyl-[protein] + 4 Fe(3+) + 2 hydrogen sulfide + 2 5'-deoxyadenosine + 2 L-methionine + 2 reduced [2Fe-2S]-[ferredoxin]. Its pathway is protein modification; protein lipoylation via endogenous pathway; protein N(6)-(lipoyl)lysine from octanoyl-[acyl-carrier-protein]: step 2/2. Functionally, catalyzes the radical-mediated insertion of two sulfur atoms into the C-6 and C-8 positions of the octanoyl moiety bound to the lipoyl domains of lipoate-dependent enzymes, thereby converting the octanoylated domains into lipoylated derivatives. This chain is Lipoyl synthase 1, mitochondrial, found in Drosophila yakuba (Fruit fly).